A 95-amino-acid chain; its full sequence is Protein TusB (95 aa).

The protein belongs to the DsrH/TusB family. As to quaternary structure, heterohexamer, formed by a dimer of trimers. The hexameric TusBCD complex contains 2 copies each of TusB, TusC and TusD. The TusBCD complex interacts with TusE.

It localises to the cytoplasm. Functionally, part of a sulfur-relay system required for 2-thiolation of 5-methylaminomethyl-2-thiouridine (mnm(5)s(2)U) at tRNA wobble positions. The sequence is that of Protein TusB from Escherichia coli (strain SMS-3-5 / SECEC).